A 124-amino-acid chain; its full sequence is Small ribosomal subunit protein eS25 (124 aa).

Over residues 1-22 the composition is skewed to basic and acidic residues; the sequence is PPKDDKKKKDAGKSAKKDKDPV. A disordered region spans residues 1 to 37; sequence PPKDDKKKKDAGKSAKKDKDPVNKSGGKAKKKKWSKG. Residues 27–37 are compositionally biased toward basic residues; sequence GKAKKKKWSKG. The residue at position 42 (Lys42) is an N6-acetyllysine. Lys51 is modified (N6-acetyllysine; alternate). Lys51 bears the N6-succinyllysine; alternate mark. Lys59 and Lys65 each carry N6-acetyllysine. The residue at position 93 (Lys93) is an N6-acetyllysine; alternate. Lys93 is subject to N6-succinyllysine; alternate.

Belongs to the eukaryotic ribosomal protein eS25 family. In terms of assembly, component of the small ribosomal subunit.

Its subcellular location is the cytoplasm. Component of the small ribosomal subunit. The ribosome is a large ribonucleoprotein complex responsible for the synthesis of proteins in the cell. The sequence is that of Small ribosomal subunit protein eS25 (RPS25) from Oryctolagus cuniculus (Rabbit).